The following is a 920-amino-acid chain: Isoleucine--tRNA ligase (920 aa).

The 'HIGH' region signature appears at 58-68 (PYANGHLHLGH). Residue Glu569 participates in L-isoleucyl-5'-AMP binding. The 'KMSKS' region signature appears at 610 to 614 (KMSKS). Lys613 provides a ligand contact to ATP. Residues Cys895, Cys898, Cys910, and Cys913 each coordinate Zn(2+).

The protein belongs to the class-I aminoacyl-tRNA synthetase family. IleS type 1 subfamily. Monomer. It depends on Zn(2+) as a cofactor.

It is found in the cytoplasm. It catalyses the reaction tRNA(Ile) + L-isoleucine + ATP = L-isoleucyl-tRNA(Ile) + AMP + diphosphate. Its function is as follows. Catalyzes the attachment of isoleucine to tRNA(Ile). As IleRS can inadvertently accommodate and process structurally similar amino acids such as valine, to avoid such errors it has two additional distinct tRNA(Ile)-dependent editing activities. One activity is designated as 'pretransfer' editing and involves the hydrolysis of activated Val-AMP. The other activity is designated 'posttransfer' editing and involves deacylation of mischarged Val-tRNA(Ile). This Helicobacter pylori (strain J99 / ATCC 700824) (Campylobacter pylori J99) protein is Isoleucine--tRNA ligase.